Here is a 386-residue protein sequence, read N- to C-terminus: Histidinol-phosphate aminotransferase (386 aa).

Lysine 240 bears the N6-(pyridoxal phosphate)lysine mark.

The protein belongs to the class-II pyridoxal-phosphate-dependent aminotransferase family. Histidinol-phosphate aminotransferase subfamily. In terms of assembly, homodimer. Pyridoxal 5'-phosphate serves as cofactor.

It catalyses the reaction L-histidinol phosphate + 2-oxoglutarate = 3-(imidazol-4-yl)-2-oxopropyl phosphate + L-glutamate. Its pathway is amino-acid biosynthesis; L-histidine biosynthesis; L-histidine from 5-phospho-alpha-D-ribose 1-diphosphate: step 7/9. The sequence is that of Histidinol-phosphate aminotransferase from Bifidobacterium longum (strain NCC 2705).